A 378-amino-acid chain; its full sequence is Chaperone protein DnaJ (378 aa).

Positions 6–70 (DYYDVLGVSR…QKRQQYDQFG (65 aa)) constitute a J domain. A CR-type zinc finger spans residues 137–219 (GKTSEISYSR…CHGKGVKTQK (83 aa)). Zn(2+)-binding residues include Cys150, Cys153, Cys167, Cys170, Cys193, Cys196, Cys207, and Cys210. CXXCXGXG motif repeat units follow at residues 150 to 157 (CEVCKGSG), 167 to 174 (CDKCGGSG), 193 to 200 (CDKCAGSG), and 207 to 214 (CHNCHGKG).

Belongs to the DnaJ family. Homodimer. The cofactor is Zn(2+).

The protein localises to the cytoplasm. Participates actively in the response to hyperosmotic and heat shock by preventing the aggregation of stress-denatured proteins and by disaggregating proteins, also in an autonomous, DnaK-independent fashion. Unfolded proteins bind initially to DnaJ; upon interaction with the DnaJ-bound protein, DnaK hydrolyzes its bound ATP, resulting in the formation of a stable complex. GrpE releases ADP from DnaK; ATP binding to DnaK triggers the release of the substrate protein, thus completing the reaction cycle. Several rounds of ATP-dependent interactions between DnaJ, DnaK and GrpE are required for fully efficient folding. Also involved, together with DnaK and GrpE, in the DNA replication of plasmids through activation of initiation proteins. The chain is Chaperone protein DnaJ from Lactobacillus delbrueckii subsp. bulgaricus (strain ATCC BAA-365 / Lb-18).